Reading from the N-terminus, the 112-residue chain is cAMP-regulated phosphoprotein 19 (112 aa).

The span at 1 to 11 (MSAESPEPASA) shows a compositional bias: low complexity. Residues 1-49 (MSAESPEPASAEEQKEMEDKVLSPEKAEEAKLKARYPHLGQKPGGSDFL) form a disordered region. The segment covering 12 to 32 (EEQKEMEDKVLSPEKAEEAKL) has biased composition (basic and acidic residues). S62 and S104 each carry phosphoserine; by GWL. Residues 72–112 (MKNKQLPTAAPDKTEVTGDHIPTPQDLPQRKPSLVASKLAG) form a disordered region. Position 104 is a phosphoserine; by PKA (S104).

It belongs to the endosulfine family. Interacts (when phosphorylated at Ser-62) with PPP2R2D. In terms of processing, phosphorylation at Ser-62 by MASTL/GWL during mitosis is essential for interaction with PPP2R2D (PR55-delta) and subsequent inactivation of PP2A.

It localises to the cytoplasm. In terms of biological role, protein phosphatase inhibitor that specifically inhibits protein phosphatase 2A (PP2A) during mitosis. Inhibition of PP2A is enhanced when ARPP19 is phosphorylated. When phosphorylated at Ser-62 during mitosis, specifically interacts with PPP2R2D (PR55-delta) and inhibits its activity, leading to inactivation of PP2A, an essential condition to keep cyclin-B1-CDK1 activity high during M phase. This is cAMP-regulated phosphoprotein 19 (ARPP19) from Taeniopygia guttata (Zebra finch).